We begin with the raw amino-acid sequence, 535 residues long: CTP synthase (535 aa).

The amidoligase domain stretch occupies residues 1–267 (MTKYIFVTGG…DQIVCDHLKL (267 aa)). Ser-13 is a CTP binding site. Ser-13 is a binding site for UTP. Residue 14–19 (SLGKGI) participates in ATP binding. Residue Tyr-54 coordinates L-glutamine. Asp-71 is an ATP binding site. Mg(2+) contacts are provided by Asp-71 and Glu-141. Residues 148–150 (DIE), 188–193 (KTKPTQ), and Lys-224 each bind CTP. Residues 188 to 193 (KTKPTQ) and Lys-224 each bind UTP. Residue 240 to 242 (RDA) coordinates ATP. Residues 292–534 (KIALVGKYVE…VSASITNKES (243 aa)) enclose the Glutamine amidotransferase type-1 domain. L-glutamine is bound at residue Gly-354. Cys-381 (nucleophile; for glutamine hydrolysis) is an active-site residue. L-glutamine contacts are provided by residues 382–385 (LGMQ), Glu-405, and Arg-462. Active-site residues include His-507 and Glu-509.

It belongs to the CTP synthase family. Homotetramer.

The catalysed reaction is UTP + L-glutamine + ATP + H2O = CTP + L-glutamate + ADP + phosphate + 2 H(+). It carries out the reaction L-glutamine + H2O = L-glutamate + NH4(+). The enzyme catalyses UTP + NH4(+) + ATP = CTP + ADP + phosphate + 2 H(+). Its pathway is pyrimidine metabolism; CTP biosynthesis via de novo pathway; CTP from UDP: step 2/2. Allosterically activated by GTP, when glutamine is the substrate; GTP has no effect on the reaction when ammonia is the substrate. The allosteric effector GTP functions by stabilizing the protein conformation that binds the tetrahedral intermediate(s) formed during glutamine hydrolysis. Inhibited by the product CTP, via allosteric rather than competitive inhibition. Catalyzes the ATP-dependent amination of UTP to CTP with either L-glutamine or ammonia as the source of nitrogen. Regulates intracellular CTP levels through interactions with the four ribonucleotide triphosphates. This Bacillus mycoides (strain KBAB4) (Bacillus weihenstephanensis) protein is CTP synthase.